Reading from the N-terminus, the 189-residue chain is UPF0301 protein RT0098 (189 aa).

It belongs to the UPF0301 (AlgH) family.

This chain is UPF0301 protein RT0098, found in Rickettsia typhi (strain ATCC VR-144 / Wilmington).